Consider the following 358-residue polypeptide: Peptide chain release factor 1 (358 aa).

N5-methylglutamine is present on Q233.

The protein belongs to the prokaryotic/mitochondrial release factor family. Post-translationally, methylated by PrmC. Methylation increases the termination efficiency of RF1.

It is found in the cytoplasm. Peptide chain release factor 1 directs the termination of translation in response to the peptide chain termination codons UAG and UAA. This is Peptide chain release factor 1 from Flavobacterium johnsoniae (strain ATCC 17061 / DSM 2064 / JCM 8514 / BCRC 14874 / CCUG 350202 / NBRC 14942 / NCIMB 11054 / UW101) (Cytophaga johnsonae).